A 369-amino-acid chain; its full sequence is Putative 2-aminoethylphosphonate import ATP-binding protein PhnT (369 aa).

The ABC transporter domain maps to 19–250 (IVLDSLRVAY…PPNRFAAEFL (232 aa)). Residue 51-58 (GPSGSGKT) coordinates ATP.

This sequence belongs to the ABC transporter superfamily. 2-aminoethylphosphonate importer (TC 3.A.1.11.5) family.

Its subcellular location is the cell inner membrane. Functionally, probably part of the PhnSTUV complex (TC 3.A.1.11.5) involved in 2-aminoethylphosphonate import. Probably responsible for energy coupling to the transport system. The sequence is that of Putative 2-aminoethylphosphonate import ATP-binding protein PhnT (phnT) from Salmonella typhimurium (strain LT2 / SGSC1412 / ATCC 700720).